The primary structure comprises 299 residues: MSSIKIECVLRENCHCGESPVWEEASNSLLFVDIPAKKVCRWDSLSKQVQRVTVDAPVSSVALRQSGGYVATVGTKFCALNWEDQSAVVLATVDKEKKNNRFNDGKVDPAGRYFAGTMAEETAPAVLERRQGSLYSLFPDHHVEKYFDQVDISNGLDWSMDHKIFYYIDSLSYSVDAFDYDLQTGKISNRRSVYKLEKEEQIPDGMCIDVEGKLWVACYNGGRVIRLDPETGKRLQTVKLPVDKTTSCCFGGKDYSEMYVTCARDGLDSKGLLQQPEAGGIFKITGLGVKGIPPYPYTG.

Residue E18 coordinates a divalent metal cation. Substrate is bound by residues R101, N103, and E121. Positions 154 and 204 each coordinate a divalent metal cation. D204 (proton donor/acceptor) is an active-site residue. Residues K244 and K253 each carry the N6-succinyllysine modification.

Belongs to the SMP-30/CGR1 family. Monomer. Zn(2+) is required as a cofactor. Mn(2+) serves as cofactor. It depends on Ca(2+) as a cofactor. Requires Mg(2+) as cofactor.

Its subcellular location is the cytoplasm. The enzyme catalyses D-glucono-1,5-lactone + H2O = D-gluconate + H(+). The protein operates within cofactor biosynthesis; L-ascorbate biosynthesis via UDP-alpha-D-glucuronate pathway; L-ascorbate from UDP-alpha-D-glucuronate: step 3/4. In terms of biological role, gluconolactonase with low activity towards other sugar lactones, including gulonolactone and galactonolactone. Catalyzes a key step in ascorbic acid (vitamin C) biosynthesis. Can also hydrolyze diisopropyl phosphorofluoridate and phenylacetate (in vitro). Calcium-binding protein. Modulates Ca(2+) signaling, and Ca(2+)-dependent cellular processes and enzyme activities. This is Regucalcin (RGN) from Bos taurus (Bovine).